The primary structure comprises 746 residues: Ferric enterobactin receptor (746 aa).

Residues 1–25 (MSSRALPAVPFLLLSSCLLANAVHA) form the signal peptide. The TonB box signature appears at 39–44 (QTVVAT). Positions 47–174 (EETKQAPGVS…AGGVVNIITK (128 aa)) constitute a TBDR plug domain. 3 disordered regions span residues 82 to 102 (VNLTGNSSSGQRGNNRQIDIR), 235 to 254 (GHESNRTGKQAGTLPAGREG), and 397 to 424 (QKLDDPSSNTQNTEEGGSIPGLAGKNRS). Positions 84 to 98 (LTGNSSSGQRGNNRQ) are enriched in polar residues. Residues 179–746 (ETHGNLSVYS…TFYTSLTASF (568 aa)) form the TBDR beta-barrel domain. Residues 402 to 411 (PSSNTQNTEE) show a composition bias toward polar residues. A TonB C-terminal box motif is present at residues 729-746 (ATYNEPGRTFYTSLTASF).

Belongs to the TonB-dependent receptor family.

It is found in the cell outer membrane. In terms of biological role, specific receptor for the siderophore ferric enterobactin. This is Ferric enterobactin receptor (pfeA) from Pseudomonas aeruginosa (strain ATCC 15692 / DSM 22644 / CIP 104116 / JCM 14847 / LMG 12228 / 1C / PRS 101 / PAO1).